The sequence spans 164 residues: Lipoprotein signal peptidase (164 aa).

3 helical membrane passes run 12-32 (WLWL…LILQ), 70-90 (WFFA…MYRS), and 102-122 (ALII…GFVV). Active-site residues include Asp123 and Asp141. A helical membrane pass occupies residues 137 to 157 (FNLADTAICVGAALIVLEGFL).

It belongs to the peptidase A8 family.

The protein resides in the cell inner membrane. The catalysed reaction is Release of signal peptides from bacterial membrane prolipoproteins. Hydrolyzes -Xaa-Yaa-Zaa-|-(S,diacylglyceryl)Cys-, in which Xaa is hydrophobic (preferably Leu), and Yaa (Ala or Ser) and Zaa (Gly or Ala) have small, neutral side chains.. It participates in protein modification; lipoprotein biosynthesis (signal peptide cleavage). In terms of biological role, this protein specifically catalyzes the removal of signal peptides from prolipoproteins. The polypeptide is Lipoprotein signal peptidase (Shigella sonnei (strain Ss046)).